The primary structure comprises 331 residues: uncharacterized protein (331 aa).

7 Pentapeptide repeat domains span residues 20-59 (LKLP…NLGQ), 60-99 (ANLV…ILRD), 100-139 (SDMT…NMRQ), 151-190 (AILG…DLRK), 191-230 (ADLS…KISE), 231-270 (AEMT…DLSR), and 271-310 (ANLT…DLMS).

This is an uncharacterized protein from Synechocystis sp. (strain ATCC 27184 / PCC 6803 / Kazusa).